A 733-amino-acid chain; its full sequence is Phosphoribosylformylglycinamidine synthase subunit PurL (733 aa).

His-41 is an active-site residue. Positions 44 and 83 each coordinate ATP. Glu-85 contacts Mg(2+). Substrate-binding positions include Ser-86–His-89 and Arg-108. His-87 serves as the catalytic Proton acceptor. Asp-109 lines the Mg(2+) pocket. Residues Gly-212 to Gln-232 form a disordered region. Gln-232 contacts substrate. Asp-260 lines the Mg(2+) pocket. Position 304–306 (Glu-304–Gln-306) interacts with substrate. The ATP site is built by Asp-488 and Gly-525. Asn-526 contacts Mg(2+). Ser-528 is a binding site for substrate.

Belongs to the FGAMS family. In terms of assembly, monomer. Part of the FGAM synthase complex composed of 1 PurL, 1 PurQ and 2 PurS subunits.

It is found in the cytoplasm. It catalyses the reaction N(2)-formyl-N(1)-(5-phospho-beta-D-ribosyl)glycinamide + L-glutamine + ATP + H2O = 2-formamido-N(1)-(5-O-phospho-beta-D-ribosyl)acetamidine + L-glutamate + ADP + phosphate + H(+). It functions in the pathway purine metabolism; IMP biosynthesis via de novo pathway; 5-amino-1-(5-phospho-D-ribosyl)imidazole from N(2)-formyl-N(1)-(5-phospho-D-ribosyl)glycinamide: step 1/2. Part of the phosphoribosylformylglycinamidine synthase complex involved in the purines biosynthetic pathway. Catalyzes the ATP-dependent conversion of formylglycinamide ribonucleotide (FGAR) and glutamine to yield formylglycinamidine ribonucleotide (FGAM) and glutamate. The FGAM synthase complex is composed of three subunits. PurQ produces an ammonia molecule by converting glutamine to glutamate. PurL transfers the ammonia molecule to FGAR to form FGAM in an ATP-dependent manner. PurS interacts with PurQ and PurL and is thought to assist in the transfer of the ammonia molecule from PurQ to PurL. This chain is Phosphoribosylformylglycinamidine synthase subunit PurL, found in Thermoanaerobacter sp. (strain X514).